The sequence spans 514 residues: CENP-B homolog protein 2 (514 aa).

The region spanning 70–145 (QIRRNRQGKY…KKRCLKHGLK (76 aa)) is the HTH CENPB-type domain. The 213-residue stretch at 172–384 (FDPKDIFNMD…FEPSIIYNCF (213 aa)) folds into the DDE-1 domain.

It localises to the nucleus. Its subcellular location is the chromosome. It is found in the centromere. In terms of biological role, binds to the central core and core-associated repeat regions of centromeric heterochromatin. This chain is CENP-B homolog protein 2 (cbh2), found in Schizosaccharomyces pombe (strain 972 / ATCC 24843) (Fission yeast).